Consider the following 212-residue polypeptide: RNA chaperone ProQ (212 aa).

The segment at 107–153 (QDKAKAKRVAQAKSANPAAKTAKKPVKKPVAKRPKPAQSSKPAKEPV) is disordered. Residues 117 to 126 (QAKSANPAAK) show a composition bias toward low complexity. A compositionally biased stretch (basic residues) spans 127 to 141 (TAKKPVKKPVAKRPK).

This sequence belongs to the ProQ family.

It is found in the cytoplasm. Functionally, RNA chaperone with significant RNA binding, RNA strand exchange and RNA duplexing activities. In Shewanella pealeana (strain ATCC 700345 / ANG-SQ1), this protein is RNA chaperone ProQ.